Reading from the N-terminus, the 699-residue chain is Elongation factor G (699 aa).

Positions 8-283 constitute a tr-type G domain; it reads EHIRNIGICA…AVVDFLPSPI (276 aa). GTP is bound by residues 17-24, 81-85, and 135-138; these read AHIDAGKT, DTPGH, and NKMD.

This sequence belongs to the TRAFAC class translation factor GTPase superfamily. Classic translation factor GTPase family. EF-G/EF-2 subfamily.

Its subcellular location is the cytoplasm. Its function is as follows. Catalyzes the GTP-dependent ribosomal translocation step during translation elongation. During this step, the ribosome changes from the pre-translocational (PRE) to the post-translocational (POST) state as the newly formed A-site-bound peptidyl-tRNA and P-site-bound deacylated tRNA move to the P and E sites, respectively. Catalyzes the coordinated movement of the two tRNA molecules, the mRNA and conformational changes in the ribosome. In Rickettsia rickettsii, this protein is Elongation factor G.